We begin with the raw amino-acid sequence, 788 residues long: Spastin (788 aa).

Residues 1 to 105 are disordered; that stretch reads MVRTKNQSSS…PRSAGGPSSV (105 aa). At 1–116 the chain is on the cytoplasmic side; that stretch reads MVRTKNQSSS…KQNLYVVSFP (116 aa). The interval 1–227 is required for localization to punctate cytoplasmic foci; it reads MVRTKNQSSS…NRSGSGYSPG (227 aa). 2 stretches are compositionally biased toward low complexity: residues 8-48 and 57-75; these read SSSS…SSHR and ATNV…SSPD. The segment at residues 117-137 is an intramembrane region (helical); sequence IIFLFNVLRSLIYQLFCIFRY. At 138-788 the chain is on the cytoplasmic side; sequence LYGASTKVIY…WSSDYGDITI (651 aa). The interval 227-788 is sufficient for interaction with microtubules and microtubule severing; the sequence is GPGDPLLAKQ…WSSDYGDITI (562 aa). The MIT domain occupies 240 to 315; the sequence is HRRAFEYISK…SMARDRLHFL (76 aa). Basic and acidic residues predominate over residues 330–353; the sequence is KEEQKPNPSREQHQKPQKAREAAD. Positions 330–484 are disordered; that stretch reads KEEQKPNPSR…SGSGSGASTP (155 aa). Positions 380-400 are enriched in low complexity; sequence LTTPRISATATTPTSSSSLAS. 2 stretches are compositionally biased toward polar residues: residues 419–433 and 453–469; these read NKSQ…SKTS and QFSS…RTPI. The interval 471-485 is required for interaction with microtubules; the sequence is NNGASGSGSGASTPV. 553–560 is a binding site for ATP; that stretch reads GPPGNGKT.

It belongs to the AAA ATPase family. Spastin subfamily. In terms of assembly, homohexamer. The homohexamer is stabilized by ATP-binding. The homohexamer may adopt a ring conformation through which microtubules pass prior to being severed. Interacts with microtubules. Interacts with atl; may be involved in microtubule dynamics.

It localises to the membrane. It is found in the cytoplasm. The protein localises to the cytoskeleton. Its subcellular location is the microtubule organizing center. The protein resides in the centrosome. It localises to the chromosome. It is found in the lipid droplet. It carries out the reaction n ATP + n H2O + a microtubule = n ADP + n phosphate + (n+1) alpha/beta tubulin heterodimers.. ATP-dependent microtubule severing protein. Stimulates microtubule minus-end depolymerization and poleward microtubule flux in the mitotic spindle. Regulates microtubule stability in the neuromuscular junction synapse. Involved in lipid metabolism by regulating the size and distribution of lipid droplets. Involved in axon regeneration by regulating microtubule severing. This Drosophila pseudoobscura pseudoobscura (Fruit fly) protein is Spastin.